The primary structure comprises 414 residues: Protein SOSEKI 2 (414 aa).

Positions 44 to 135 (RRVQVVYYLT…YVLKGSEITD (92 aa)) are DIX-like oligomerization domain. The segment at 171–273 (SFDDAELYVG…GDPVEPGSGR (103 aa)) is disordered. Over residues 173–192 (DDAELYVGEEEEEEDGEYEL) the composition is skewed to acidic residues. Polar residues predominate over residues 205-229 (PQSRCSRGVSTETMESTEQKPNLTK). A compositionally biased stretch (basic and acidic residues) spans 230–242 (TEQDLQVRSDSSD). Positions 283–284 (CG) match the Association to cell membranes motif.

It belongs to the SOSEKI family. Homodimer. Forms long polymer filaments with other SOKs proteins polymers (e.g. SOK1, SOK2, SOK3 and SOK4) crucial for polar localization and biological activity. Binds to ANGUSTIFOLIA (AN). Expressed during embryogenesis and in roots.

It is found in the cell membrane. Part of a three-gene cluster containing FLC, UFC and DFC, which is coordinately regulated in response to vernalization. Also regulated by FLX. SOSEKI proteins (SOK1-5) locally interpret global polarity cues and can influence cell division orientation to coordinate cell polarization relative to body axes, probably by guiding ANGUSTIFOLIA (AN) polarized localization. This Arabidopsis thaliana (Mouse-ear cress) protein is Protein SOSEKI 2.